A 178-amino-acid polypeptide reads, in one-letter code: ATP-dependent protease subunit HslV (178 aa).

Thr7 is an active-site residue. Na(+) is bound by residues Gly162, Cys165, and Thr168.

Belongs to the peptidase T1B family. HslV subfamily. As to quaternary structure, a double ring-shaped homohexamer of HslV is capped on each side by a ring-shaped HslU homohexamer. The assembly of the HslU/HslV complex is dependent on binding of ATP.

Its subcellular location is the cytoplasm. The enzyme catalyses ATP-dependent cleavage of peptide bonds with broad specificity.. With respect to regulation, allosterically activated by HslU binding. Protease subunit of a proteasome-like degradation complex believed to be a general protein degrading machinery. This is ATP-dependent protease subunit HslV from Burkholderia ambifaria (strain MC40-6).